We begin with the raw amino-acid sequence, 717 residues long: MLNQRKPVEQMTEAEAAEELAFLAAELSRHDMLYHGKDDPEISDADYDALKRRNDLIEERFPALIREDSPSQKVGAAPSLTFAPVVHARPMLSLDNSFSDEDARAFVAGIYRFLGRLPDGSIAFTVEPKIDGLSMSLRYENRRLVTAATRGDGTTGENVTANVRTIGMIPQRLPAEAPDVVEIRGEIYMAKSDFAALNAEMAAQGRPLYVNPRNTASGSLRQLDAKVTASRRLRFFAYAWGEMSAMPADTQLGMVETFKAWGFPVNPLMQRFFSADELLEHYHHIERERPELDYDIDGVVYKVDQLDLQARLGFRSRSPRWATAHKFPAERAFTRLKGIDIQVGRTGALTPVARLEPITVGGVVVTNATLHNEDYIRGIGNTGEPIREGRDIRIGDMVIVQRAGDVIPQIVDVVMDERPEGTEPYRFPTSCPICGSHAVRDINEKTGKVDAVRRCTGGFVCRAQAVEHLKHFVSRNAFDIEGLGSKQIEFFFESEDETLRIRTAPDIFTLERRQESSLTKLENIDGFGKVSVRKLYEAINARRSIGLHRFIYALGIRHVGETTAKLLARSYGTYEHFGAAMTEAGGFSGDAWNELNSIDGIGEVVARAIVEFYKEPRNLKVLSDLLEEVTPERAEMPVATDSPVAGKTVVFTGSLEKMTRDEAKAKAESLGAKVAGSVSKKTDIVVAGPGAGSKLDKARELGLQTMDEDEWLALIGG.

NAD(+)-binding positions include 44-48 (DADYD), 93-94 (SL), and E127. K129 serves as the catalytic N6-AMP-lysine intermediate. The NAD(+) site is built by R150, E186, K302, and K326. Positions 431, 434, 455, and 461 each coordinate Zn(2+). In terms of domain architecture, BRCT spans 639–717 (ATDSPVAGKT…EDEWLALIGG (79 aa)).

It belongs to the NAD-dependent DNA ligase family. LigA subfamily. Mg(2+) serves as cofactor. Requires Mn(2+) as cofactor.

The catalysed reaction is NAD(+) + (deoxyribonucleotide)n-3'-hydroxyl + 5'-phospho-(deoxyribonucleotide)m = (deoxyribonucleotide)n+m + AMP + beta-nicotinamide D-nucleotide.. Its function is as follows. DNA ligase that catalyzes the formation of phosphodiester linkages between 5'-phosphoryl and 3'-hydroxyl groups in double-stranded DNA using NAD as a coenzyme and as the energy source for the reaction. It is essential for DNA replication and repair of damaged DNA. In Sinorhizobium medicae (strain WSM419) (Ensifer medicae), this protein is DNA ligase.